We begin with the raw amino-acid sequence, 56 residues long: Large ribosomal subunit protein bL32 (56 aa).

The protein belongs to the bacterial ribosomal protein bL32 family.

The protein is Large ribosomal subunit protein bL32 of Brevibacillus brevis (strain 47 / JCM 6285 / NBRC 100599).